The primary structure comprises 1880 residues: Nonribosomal peptide synthetase otaB (1880 aa).

Positions 205-594 (AQAVERGNSI…SVSFVGRRQA (390 aa)) are adenylation 1. The region spanning 728–804 (LPLSPLERQI…ELGAHLEQEA (77 aa)) is the Carrier domain. An O-(pantetheine 4'-phosphoryl)serine modification is found at Ser-765. The tract at residues 840–1250 (EDVYPCTALQ…LLSPQDQQQL (411 aa)) is condensation. The interval 1269–1665 (QRQCLAHPQK…GRKDRQVKLR (397 aa)) is adenylation 2.

Belongs to the NRP synthetase family.

The enzyme catalyses 7-carboxymellein + L-phenylalanine + ATP = ochratoxin B + ADP + phosphate + H(+). It participates in mycotoxin biosynthesis. Functionally, nonribosomal peptide synthetase; part of the gene cluster that mediates the biosynthesis of ochratoxin A (OTA), a mycotoxin composed of a chlorinated type I polyketide dihydroisocoumarin moiety linked to L-phenylalanine, and demonstrated to have nephrotoxic, immunotoxic, genotoxic, neurotoxic, and teratogenic properties. OtaB is responsible for the linking of phenylalanine to the dihydroisocoumarin ring. The pathway begins with the highly reducing polyketide synthase otaA that catalyzes the formation of the isocoumarin group during the initial stages of biosynthesis, starting from one acetate and 4 malonate units, to originate the characteristic pentaketide skeleton 7-methylmellein (7-MM) of the OTA molecule. The newly identified cyclase otaY might be involved in the polyketide cyclization reaction during the initial steps of the OTA biosynthesis. 7-MM is then oxidized into 7-carboxymellein (also called ochratoxin beta) by the cytochrome P450 monooxygenase otaC. The NRPS encoded by the otaB gene is involved in the linking of phenylalanine to the dihydroisocoumarin ring. The reaction catalyzed by NRPS results in the production of ochratoxin B (OTB), which is the non-chlorinated analog of OTA and which subsequently serves as the substrate of the halogenase otaD for chlorination activity to form the final molecular structure of OTA, containing a chlorine atom in the C-5 position of the molecule. The protein is Nonribosomal peptide synthetase otaB of Aspergillus niger (strain ATCC MYA-4892 / CBS 513.88 / FGSC A1513).